Reading from the N-terminus, the 336-residue chain is MSASIIAIDAMGGDFGPHCIVPACISALAEFPSLHLALVGQAPLIEEQLARQSGVDRSRLQVHHASEVIAMDERPAQALRGKPDASMRVALELVRQRQAHACVSAGNTGALMALSRYVLKTLPGIDRPAMVSPIPTERGHCYLLDLGANVDCSAEHLYQFAIMGAVAAETLGVARPRVALLNVGTEDIKGNQQVKLAASLLLQARGLNFIGYIEGDGVYRGEADVVVCDGFVGNILLKASEGLAKMITGRVETLFNEGLFAQAVGALAMPLLRRLKADLAPARHNGASFLGLQGIVVKSHGAAGQESFQSAIRCALREVQENLPQRLHGRLEDLLL.

It belongs to the PlsX family. In terms of assembly, homodimer. Probably interacts with PlsY.

The protein localises to the cytoplasm. It catalyses the reaction a fatty acyl-[ACP] + phosphate = an acyl phosphate + holo-[ACP]. It participates in lipid metabolism; phospholipid metabolism. Functionally, catalyzes the reversible formation of acyl-phosphate (acyl-PO(4)) from acyl-[acyl-carrier-protein] (acyl-ACP). This enzyme utilizes acyl-ACP as fatty acyl donor, but not acyl-CoA. The polypeptide is Phosphate acyltransferase (Ectopseudomonas mendocina (strain ymp) (Pseudomonas mendocina)).